A 124-amino-acid polypeptide reads, in one-letter code: Large ribosomal subunit protein bL12 (124 aa).

The protein belongs to the bacterial ribosomal protein bL12 family. In terms of assembly, homodimer. Part of the ribosomal stalk of the 50S ribosomal subunit. Forms a multimeric L10(L12)X complex, where L10 forms an elongated spine to which 2 to 4 L12 dimers bind in a sequential fashion. Binds GTP-bound translation factors.

In terms of biological role, forms part of the ribosomal stalk which helps the ribosome interact with GTP-bound translation factors. Is thus essential for accurate translation. The protein is Large ribosomal subunit protein bL12 of Cupriavidus necator (strain ATCC 17699 / DSM 428 / KCTC 22496 / NCIMB 10442 / H16 / Stanier 337) (Ralstonia eutropha).